Here is a 191-residue protein sequence, read N- to C-terminus: Potassium-transporting ATPase KdpC subunit (191 aa).

The chain crosses the membrane as a helical span at residues 7 to 27; that stretch reads ASLVLFLSLTLLTGVAYPLLV.

This sequence belongs to the KdpC family. As to quaternary structure, the system is composed of three essential subunits: KdpA, KdpB and KdpC.

It is found in the cell inner membrane. Functionally, part of the high-affinity ATP-driven potassium transport (or Kdp) system, which catalyzes the hydrolysis of ATP coupled with the electrogenic transport of potassium into the cytoplasm. This subunit acts as a catalytic chaperone that increases the ATP-binding affinity of the ATP-hydrolyzing subunit KdpB by the formation of a transient KdpB/KdpC/ATP ternary complex. This chain is Potassium-transporting ATPase KdpC subunit, found in Methylibium petroleiphilum (strain ATCC BAA-1232 / LMG 22953 / PM1).